Consider the following 984-residue polypeptide: Vacuolar sorting protein 3 (984 aa).

Residues 21–339 (KIRALSLSPI…GCGPSLLAAD (319 aa)) form the CNH domain. A CHCR repeat occupies 663–844 (VLTSDKRTEE…YLDPQNGKEP (182 aa)).

The protein belongs to the TRAP1 family. In terms of assembly, component of the class C core vacuole/endosome tethering (CORVET) complex. Their common core is composed of the class C Vps core proteins VPS11, VCL1, VPS18 and VPS33, which in CORVET further associates with VPS3. Interacts directly with VPS11. Binds to RABF2A and RABF2B.

The protein localises to the endosome membrane. It localises to the cytoplasm. Essential protein required during embryogenesis. Believed to act as a component of the putative class C core vacuole/endosome tethering (CORVET) endosomal tethering complexes. CORVET is required for vacuolar transport of SYP22. Involved in root development. Plays a role in vesicle-mediated protein trafficking of the endocytic membrane transport pathway. This chain is Vacuolar sorting protein 3, found in Arabidopsis thaliana (Mouse-ear cress).